Consider the following 251-residue polypeptide: uncharacterized protein (251 aa).

The N-terminal stretch at Met-1–Gly-25 is a signal peptide. Cys-26 carries the N-palmitoyl cysteine lipid modification. Cys-26 carries S-diacylglycerol cysteine lipidation. Residues Ser-40 to Leu-84 enclose the LysM domain. Residues Thr-93 to Ala-112 show a composition bias toward low complexity. Residues Thr-93–Lys-115 form a disordered region.

Belongs to the peptidase M23B family.

It localises to the cell inner membrane. This is an uncharacterized protein from Escherichia coli (strain K12).